Here is a 117-residue protein sequence, read N- to C-terminus: Large ribosomal subunit protein bL19 (117 aa).

It belongs to the bacterial ribosomal protein bL19 family.

Functionally, this protein is located at the 30S-50S ribosomal subunit interface and may play a role in the structure and function of the aminoacyl-tRNA binding site. This is Large ribosomal subunit protein bL19 from Proteus mirabilis (strain HI4320).